Reading from the N-terminus, the 49-residue chain is uncharacterized protein (49 aa).

A helical transmembrane segment spans residues 8–28 (FFLFSSGVLQATTLLLVILIF).

It is found in the cell membrane. This is an uncharacterized protein from Bacillus subtilis (strain 168).